The sequence spans 356 residues: uncharacterized protein (356 aa).

6 helical membrane-spanning segments follow: residues 2 to 22, 35 to 55, 76 to 96, 99 to 119, 124 to 144, and 152 to 172; these read IESI…FHRL, GYVT…PIPF, NMGY…FAFG, LLYG…GPFL, IVAL…LSIF, and EIAF…ITFV. Residues 218–353 enclose the GGDEF domain; sequence ESLALLLIDI…GRNQVMFNPI (136 aa).

The protein localises to the cell membrane. This is an uncharacterized protein from Staphylococcus haemolyticus (strain JCSC1435).